The following is a 196-amino-acid chain: MFEFITDEDERGQVGIGTLIVFIAMVLVAAIAAGVLINTAGYLQSKGSATGEEASAQVSNRINIVSAYGNVDTSGSTEVVNYANLTVRQAAGADNINLSKSTIQWIGPDTATTLTYDGTTADAENFTTNSIKGDNADVLVDQSDRIEIVMDAAEITTNGLKAGEEVQLTVTTQYGSKTTYWANVPESLKDKNAVTL.

Positions 1 to 12 (MFEFITDEDERG) are excised as a propeptide.

The protein belongs to the archaeal flagellin family. Post-translationally, glycosylated.

It localises to the archaeal flagellum. Flagellin is the subunit protein which polymerizes to form the filaments of archaeal flagella. This chain is Flagellin B2 (flaB2), found in Halobacterium salinarum (strain ATCC 700922 / JCM 11081 / NRC-1) (Halobacterium halobium).